Consider the following 548-residue polypeptide: Biotin-dependent acetyl-/propionyl-coenzyme A carboxylase beta5 subunit (548 aa).

A disordered region spans residues 1 to 23 (MTSVTDRSAHSAERSTEHTIDIH). Residues 7–21 (RSAHSAERSTEHTID) show a composition bias toward basic and acidic residues. The region spanning 25–281 (TAGKLAELHK…NNSTDAPRYQ (257 aa)) is the CoA carboxyltransferase N-terminal domain. Positions 295–541 (DEDLELDTLI…ERKIAQLPPK (247 aa)) constitute a CoA carboxyltransferase C-terminal domain.

This sequence belongs to the AccD/PCCB family. In terms of assembly, the biotin-dependent acyl-CoA carboxylase complex is composed of AccA3, which contains the biotin carboxylase (BC) and biotin carboxyl carrier protein (BCCP) domains, and AccD5, which contains the carboxyl transferase (CT) domain.

The catalysed reaction is N(6)-carboxybiotinyl-L-lysyl-[protein] + acetyl-CoA = N(6)-biotinyl-L-lysyl-[protein] + malonyl-CoA. The enzyme catalyses N(6)-carboxybiotinyl-L-lysyl-[protein] + propanoyl-CoA = methylmalonyl-CoA + N(6)-biotinyl-L-lysyl-[protein]. The protein operates within lipid metabolism; mycolic acid biosynthesis. Functionally, component of a biotin-dependent acyl-CoA carboxylase complex. This subunit transfers the CO2 from carboxybiotin to the CoA ester substrate. When associated with the alpha3 subunit AccA3, is involved in the carboxylation of acetyl-CoA and propionyl-CoA. The sequence is that of Biotin-dependent acetyl-/propionyl-coenzyme A carboxylase beta5 subunit (accD5) from Mycobacterium tuberculosis (strain CDC 1551 / Oshkosh).